The primary structure comprises 815 residues: Minichromosome loss protein 1 (815 aa).

WD repeat units follow at residues 11 to 50 (AHTD…EPDS), 53 to 90 (NHQD…EHTL), 93 to 132 (RTTL…QIFS), 135 to 174 (PAKA…LIKF), and 228 to 267 (ENHS…VVVE). A disordered region spans residues 306-362 (LKEENDPTKPLTSSKSKNRTSKELDDLFGSDDEQSQNVNDLDGNSANEENEFINHDG). The span at 340–352 (SQNVNDLDGNSAN) shows a compositional bias: polar residues. The WD 6 repeat unit spans residues 517 to 553 (ENESPVTISLSSSVVLVCTSAGYVRVFSRQGFPISIH).

As to quaternary structure, interacts with pof3 and pol1.

The protein resides in the nucleus. Its subcellular location is the chromosome. Has a role in regulating DNA replication complexes. Acts as a regulator of post DNA replication initiation. Associates with chromatin during G1 and S phases of mitosis. Required for the transcriptional repression of the outer repeats of the centromeric region. Acts as a polymerase alpha replication accessory factor and is important for S-phase DNA damage survival. Plays a role in lagging-strand synthesis and Ozaki fragment processing, in addition to DNA repair. The polypeptide is Minichromosome loss protein 1 (mcl1) (Schizosaccharomyces pombe (strain 972 / ATCC 24843) (Fission yeast)).